Here is a 186-residue protein sequence, read N- to C-terminus: UPF0397 protein lp_0150 (186 aa).

Transmembrane regions (helical) follow at residues V12 to P32, G45 to I65, G76 to A96, L112 to P132, and V151 to L171.

This sequence belongs to the UPF0397 family.

The protein localises to the cell membrane. The chain is UPF0397 protein lp_0150 from Lactiplantibacillus plantarum (strain ATCC BAA-793 / NCIMB 8826 / WCFS1) (Lactobacillus plantarum).